Here is a 600-residue protein sequence, read N- to C-terminus: Methylenetetrahydrofolate reductase 2 (600 aa).

Glutamate 22 acts as the Proton donor/acceptor in catalysis. Residues 22–27 (EYFVPK) and 54–55 (TW) contribute to the NAD(+) site. Residues 54 to 55 (TW), histidine 84, 114 to 116 (RGD), 133 to 134 (YA), tyrosine 156, aspartate 171, and lysine 178 contribute to the FAD site. Aspartate 116 contributes to the substrate binding site. Glutamine 189 and tyrosine 282 together coordinate substrate.

The protein belongs to the methylenetetrahydrofolate reductase family. FAD serves as cofactor.

The enzyme catalyses (6S)-5-methyl-5,6,7,8-tetrahydrofolate + NADP(+) = (6R)-5,10-methylene-5,6,7,8-tetrahydrofolate + NADPH + H(+). It functions in the pathway one-carbon metabolism; tetrahydrofolate interconversion. This is Methylenetetrahydrofolate reductase 2 (MET13) from Saccharomyces cerevisiae (strain ATCC 204508 / S288c) (Baker's yeast).